A 202-amino-acid polypeptide reads, in one-letter code: Small ribosomal subunit protein uS4c (202 aa).

The region spanning 90–158 (MRSDNVIFRL…ISKNIELYQK (69 aa)) is the S4 RNA-binding domain.

It belongs to the universal ribosomal protein uS4 family. Part of the 30S ribosomal subunit. Contacts protein S5. The interaction surface between S4 and S5 is involved in control of translational fidelity.

Its subcellular location is the plastid. It localises to the chloroplast. Functionally, one of the primary rRNA binding proteins, it binds directly to 16S rRNA where it nucleates assembly of the body of the 30S subunit. In terms of biological role, with S5 and S12 plays an important role in translational accuracy. The protein is Small ribosomal subunit protein uS4c (rps4) of Exsertotheca crispa (Moss).